Consider the following 539-residue polypeptide: E3 ubiquitin-protein ligase arc-1 (539 aa).

The segment at 6-53 (CNVCNEEYSARDPLKCPRVLTGCGHTICHNCAISIAGRNSSIFCPFDR) adopts an RING-type zinc-finger fold. The B box-type zinc finger occupies 103 to 149 (LLNLECDEDSEHVAVIYCTVCDSNLCERCSESTHSTNVLSKHRRIPL). The segment at 369-539 (ESRVVLLGLD…LSRLNGTCPV (171 aa)) is ARF-like. Residues 376 to 383 (GLDGAGKT), 422 to 426 (DVGGL), and 481 to 484 (NRKD) contribute to the GTP site.

It in the C-terminal section; belongs to the small GTPase superfamily. Arf family.

The enzyme catalyses S-ubiquitinyl-[E2 ubiquitin-conjugating enzyme]-L-cysteine + [acceptor protein]-L-lysine = [E2 ubiquitin-conjugating enzyme]-L-cysteine + N(6)-ubiquitinyl-[acceptor protein]-L-lysine.. It participates in protein modification; protein ubiquitination. Acts as an E3 ubiquitin-protein ligase. The sequence is that of E3 ubiquitin-protein ligase arc-1 (arc-1) from Caenorhabditis elegans.